Reading from the N-terminus, the 108-residue chain is MLYSIFIFLLAGLCEIGGGYLIWLWLREGQSSWLGFIGGVILMMYGVIATFQSFPTFGRVYAAYGGVFIVMSLIWAYIVDKQAPDKYDLIGACICIIGVCVMILPSRT.

A run of 4 helical transmembrane segments spans residues 5-25 (IFIF…IWLW), 31-51 (SSWL…IATF), 60-80 (VYAA…YIVD), and 86-106 (KYDL…ILPS).

It belongs to the UPF0060 family.

It is found in the cell membrane. The polypeptide is UPF0060 membrane protein SH0717 (Staphylococcus haemolyticus (strain JCSC1435)).